Reading from the N-terminus, the 456-residue chain is FAD-dependent monooxygenase sor5 (456 aa).

A helical membrane pass occupies residues 18–38; it reads PLEVAIVGGGLTGLALALGLL. The N-linked (GlcNAc...) asparagine glycan is linked to Asn43. Glu48 and Arg119 together coordinate FAD. Arg200 is an active-site residue. Asp331 and Ala344 together coordinate FAD.

The protein belongs to the paxM FAD-dependent monooxygenase family. FAD is required as a cofactor.

The protein resides in the membrane. It functions in the pathway secondary metabolite biosynthesis. FAD-dependent monooxygenase; part of the SOR gene cluster that mediates the biosynthesis of sorbicillinoids, a diverse group of yellow secondary metabolites that restrict growth of competing pathogenic fungi but not of bacteria. Sorbicillinoids biosynthesis requires the action of two PKSs. The SOR cluster is required for the production of trichodimerol and dihydrotrichotetronin, with sor2 being sufficient for production of trichodimerol, but not dihydrotrichotetronin in the light. Sor1 iteratively combines three acetyl units and the growing chain is modified by the ketoacyl reductase subunit, and optional by the enoyl reductase subunit in the second cycle. The polyketide is then handed over to the PKS sor2, which adds three more acetyl units, and two methyl groups. Sor2 releases an aldehyde, which undergoes spontaneous cyclization resulting in the formation of sorbicillin or 2',3'-dihydrosorbicillin. The monooxygenase sor5 oxidizes sorbicillin and 2',3'-dihydrosorbicillin to 2',3'-dihydrosorbicillinol and sorbicillinol, respectively. The oxidoreductase sor8 further converts sorbicillinol into oxosorbicillinol. Sorbicillinol is the building block for the other sorbicillinoids such as disorbicillinol, bisvertinolon, dihydrobisvertinolone, and dihydrotrichotetronine. The polypeptide is FAD-dependent monooxygenase sor5 (Hypocrea jecorina (strain QM6a) (Trichoderma reesei)).